The primary structure comprises 127 residues: Large ribosomal subunit protein bL17 (127 aa).

The protein belongs to the bacterial ribosomal protein bL17 family. As to quaternary structure, part of the 50S ribosomal subunit. Contacts protein L32.

In Legionella pneumophila (strain Corby), this protein is Large ribosomal subunit protein bL17.